The chain runs to 431 residues: Glutamyl-tRNA reductase (431 aa).

Substrate-binding positions include Thr-49 to Arg-52, Ser-109, Glu-114 to Gln-116, and Gln-120. Cys-50 (nucleophile) is an active-site residue. Gly-189–Ser-194 serves as a coordination point for NADP(+).

It belongs to the glutamyl-tRNA reductase family. As to quaternary structure, homodimer.

The catalysed reaction is (S)-4-amino-5-oxopentanoate + tRNA(Glu) + NADP(+) = L-glutamyl-tRNA(Glu) + NADPH + H(+). The protein operates within porphyrin-containing compound metabolism; protoporphyrin-IX biosynthesis; 5-aminolevulinate from L-glutamyl-tRNA(Glu): step 1/2. It participates in porphyrin-containing compound metabolism; chlorophyll biosynthesis. In terms of biological role, catalyzes the NADPH-dependent reduction of glutamyl-tRNA(Glu) to glutamate 1-semialdehyde (GSA). The polypeptide is Glutamyl-tRNA reductase (Trichodesmium erythraeum (strain IMS101)).